Here is a 187-residue protein sequence, read N- to C-terminus: UPF0301 protein Shewmr7_1270 (187 aa).

This sequence belongs to the UPF0301 (AlgH) family.

In Shewanella sp. (strain MR-7), this protein is UPF0301 protein Shewmr7_1270.